Reading from the N-terminus, the 296-residue chain is uncharacterized protein (296 aa).

The next 6 helical transmembrane spans lie at 10–29 (FSTLIILGITLGIDLIFSLL), 36–58 (YIVLRILEIFIVFFNIYQLYYIL), 112–131 (FFALGTFSVNDIGIVNMFVT), 188–210 (ILIFLISIVILMVTIIPFILYLR), 241–260 (MMYGAYNMIIFFCIYYSAYF), and 273–295 (MYISFLVAFIFLIFQFKIYVTYI).

It localises to the cell membrane. This is an uncharacterized protein from Clostridium acetobutylicum (strain ATCC 824 / DSM 792 / JCM 1419 / IAM 19013 / LMG 5710 / NBRC 13948 / NRRL B-527 / VKM B-1787 / 2291 / W).